Reading from the N-terminus, the 357-residue chain is Phosphoribosylformylglycinamidine cyclo-ligase (357 aa).

Belongs to the AIR synthase family.

It localises to the cytoplasm. It catalyses the reaction 2-formamido-N(1)-(5-O-phospho-beta-D-ribosyl)acetamidine + ATP = 5-amino-1-(5-phospho-beta-D-ribosyl)imidazole + ADP + phosphate + H(+). It participates in purine metabolism; IMP biosynthesis via de novo pathway; 5-amino-1-(5-phospho-D-ribosyl)imidazole from N(2)-formyl-N(1)-(5-phospho-D-ribosyl)glycinamide: step 2/2. This Rhizobium johnstonii (strain DSM 114642 / LMG 32736 / 3841) (Rhizobium leguminosarum bv. viciae) protein is Phosphoribosylformylglycinamidine cyclo-ligase.